The chain runs to 462 residues: Tubulin gamma-1 chain (462 aa).

Residue 142-148 (AGGTGSG) coordinates GTP.

Belongs to the tubulin family.

The protein resides in the cytoplasm. It is found in the cytoskeleton. It localises to the microtubule organizing center. Its subcellular location is the centrosome. In terms of biological role, tubulin is the major constituent of microtubules. The gamma chain is found at microtubule organizing centers (MTOC) such as the spindle poles or the centrosome, suggesting that it is involved in the minus-end nucleation of microtubule assembly. This chain is Tubulin gamma-1 chain, found in Euplotes crassus.